Here is a 681-residue protein sequence, read N- to C-terminus: Potassium-transporting ATPase ATP-binding subunit (681 aa).

The next 4 membrane-spanning stretches (helical) occupy residues 30-50, 59-79, 216-236, and 255-275; these read LLVY…FFGI, LAIA…EAIA, ILLV…LPFT, and IALL…SIGI. Residue Asp306 is the 4-aspartylphosphate intermediate of the active site. Residues Asp343, Glu347, 376 to 383, and Lys394 each bind ATP; that span reads FTATTRMS. Mg(2+)-binding residues include Asp517 and Asp521. Helical transmembrane passes span 587-607, 615-635, and 661-681; these read FAII…LNLM, AILS…PLSL, and LIAP…LGIV.

Belongs to the cation transport ATPase (P-type) (TC 3.A.3) family. Type IA subfamily. As to quaternary structure, the system is composed of three essential subunits: KdpA, KdpB and KdpC.

It is found in the cell membrane. It carries out the reaction K(+)(out) + ATP + H2O = K(+)(in) + ADP + phosphate + H(+). Its function is as follows. Part of the high-affinity ATP-driven potassium transport (or Kdp) system, which catalyzes the hydrolysis of ATP coupled with the electrogenic transport of potassium into the cytoplasm. This subunit is responsible for energy coupling to the transport system and for the release of the potassium ions to the cytoplasm. This chain is Potassium-transporting ATPase ATP-binding subunit, found in Listeria monocytogenes serotype 4b (strain CLIP80459).